We begin with the raw amino-acid sequence, 321 residues long: Probable protein phosphatase 2C 44 (321 aa).

Disordered stretches follow at residues 1–36 (MVGRMERQSASSSASCSPSSSAAGTSSSSSACGGKK) and 51–70 (NSSSTDTGKGRSKQSSNKVT). The span at 9–31 (SASSSASCSPSSSAAGTSSSSSA) shows a compositional bias: low complexity. Residues 51-69 (NSSSTDTGKGRSKQSSNKV) are compositionally biased toward polar residues. Positions 70–319 (THGFHLVEGK…DDISCIVIRF (250 aa)) constitute a PPM-type phosphatase domain. Residues Asp-107, Gly-108, Asp-271, and Asp-310 each coordinate Mn(2+).

It belongs to the PP2C family. It depends on Mg(2+) as a cofactor. Requires Mn(2+) as cofactor.

The catalysed reaction is O-phospho-L-seryl-[protein] + H2O = L-seryl-[protein] + phosphate. The enzyme catalyses O-phospho-L-threonyl-[protein] + H2O = L-threonyl-[protein] + phosphate. The chain is Probable protein phosphatase 2C 44 from Oryza sativa subsp. japonica (Rice).